The sequence spans 371 residues: Protein maelstrom 1 (371 aa).

The HMG box DNA-binding region spans 2-68; the sequence is AQNKPNAFMA…VLERESKTER (67 aa).

This sequence belongs to the maelstrom family.

It localises to the cytoplasm. It is found in the nucleus. Involved both in the piRNA and miRNA metabolic processes. As a component of the meiotic nuage, plays a central role during oogenesis by repressing transposable elements and preventing their mobilization, which is essential for the germline integrity. Repression of transposable elements is mediated via the piRNA metabolic process, which mediates the repression of transposable elements during meiosis by forming complexes composed of piRNAs and Piwi proteins and governs the repression of transposons. As a nuclear component, it is required for proper differentiation in the germline stem cell (GSC) lineage by repressing microRNA-7 (miR-7), thereby acting as an indirect regulator of bag-of-marbles (Bam). Acts by binding to the promoter of miR-7 gene and repressing its expression; miR-7 repression alleviates the Bam repression by miR-7, thereby allowing differentiation in the germline stem cell (GSC) lineage. This is Protein maelstrom 1 (mael1) from Drosophila pseudoobscura pseudoobscura (Fruit fly).